Consider the following 255-residue polypeptide: F-box only protein 44 (255 aa).

The 48-residue stretch at 3–50 (VGNINELPENILLELFTHVPARQLLLNCRLVCSLWRDLIDLVTLWKRK) folds into the F-box domain. Residues 71 to 252 (FYFLRSLHRN…VTNSSITIGP (182 aa)) enclose the FBA domain.

Part of a SCF (SKP1-cullin-F-box) protein ligase complex. Interacts with SKP1 and CUL1. As to expression, abundantly expressed in brain and kidney. Expressed at lower levels in heart, spleen and liver.

Its function is as follows. Substrate-recognition component of the SCF (SKP1-CUL1-F-box protein)-type E3 ubiquitin ligase complex. The chain is F-box only protein 44 (FBXO44) from Homo sapiens (Human).